Here is an 860-residue protein sequence, read N- to C-terminus: M-phase phosphoprotein 8 (860 aa).

N-acetylmethionine is present on M1. A phosphoserine mark is found at S51, S85, S136, and S138. Positions 59–118 (FEVEKILDMKTEGGKVLYKVRWKGYTSDDDTWEPEIHLEDCKEVLLEFRKKIAENKAKAV) constitute a Chromo domain. Residues 80–87 (WKGYTSDD) are histone H3K9me3 binding. Residues 129–141 (NDIFEANSDSDQQ) show a composition bias toward polar residues. Residues 129–191 (NDIFEANSDS…SKPDLESSLE (63 aa)) form a disordered region. A Phosphothreonine modification is found at T144. Phosphoserine; by CDK1 is present on residues S149 and S164. Basic and acidic residues-rich tracts occupy residues 159-169 (QREEKSPDDLK) and 177-186 (KLKDKSKPDL). Residues S188, S189, and S192 each carry the phosphoserine modification. The span at 206-249 (AKEELKESKKPKKDEVKETKELKKVKKGEIRDLKTKTREDPKEN) shows a compositional bias: basic and acidic residues. Positions 206 to 440 (AKEELKESKK…GRKEPKGLKT (235 aa)) are disordered. The span at 259 to 268 (ESQVESESSV) shows a compositional bias: low complexity. Phosphoserine occurs at positions 266, 272, and 279. Positions 280–314 (EGLHSDSREEKQNTKSARERAGQDMGLEHGFEKPL) are enriched in basic and acidic residues. Position 319 is a phosphoserine (S319). Phosphothreonine; by CDK1 is present on T334. A compositionally biased stretch (basic and acidic residues) spans 336–377 (RKAEDTRENRKLENKNAFLEKKTVPKKQRNQDRSKSAAELEK). T385 is modified (phosphothreonine; by CDK1). Phosphoserine occurs at positions 392, 400, and 403. Residues 408 to 440 (KETKRNESKEKYQKRHDSDKEEKGRKEPKGLKT) are compositionally biased toward basic and acidic residues. An interaction with humanin region spans residues 431–560 (GRKEPKGLKT…HLDGKDENFA (130 aa)). T454 bears the Phosphothreonine mark. The tract at residues 458–496 (KNDVSENNRKREEIPLDFKTIDDHKTKENKQSLKERRNT) is disordered. ANK repeat units lie at residues 600–629 (SGMTLVMLAAAGGQDDLLRLLITKGAKVNG), 633–662 (NGTTALIHAAEKNFLTTVAILLEAGAFVNV), 666–695 (NGETALMKACKRGNSDIVRLVIECGADCNI), and 699–728 (HQNSALHFAKQSNNVLVYDLLKNHLETLSR).

Homodimer. Interacts (via chromo domain) with histone H3K9me3. Has the highest affinity for H3K9me3, and lesser affinity for H3K9me2 and H3K9me1. Component of the HUSH complex; at least composed of TASOR, PPHLN1 and MPHOSPH8. Interacts with DNMT3, EHMT1 and SETDB1. Interacts with MORC2; the interaction associateS MORC2 with the HUSH complex which recruits MORC2 to heterochromatic loci. Interacts with ZNF638; leading to recruitment of the HUSH complex to unintegrated retroviral DNA. Interacts with TASOR. Interacts with humanin. Phosphorylated in M (mitotic) phase. Phosphorylation by CDK1 promotes dissociation from chromatin.

It localises to the nucleus. Its subcellular location is the chromosome. Its function is as follows. Heterochromatin component that specifically recognizes and binds methylated 'Lys-9' of histone H3 (H3K9me) and promotes recruitment of proteins that mediate epigenetic repression. Mediates recruitment of the HUSH complex to H3K9me3 sites: the HUSH complex is recruited to genomic loci rich in H3K9me3 and is required to maintain transcriptional silencing by promoting recruitment of SETDB1, a histone methyltransferase that mediates further deposition of H3K9me3, as well as MORC2. Binds H3K9me and promotes DNA methylation by recruiting DNMT3A to target CpG sites; these can be situated within the coding region of the gene. Mediates down-regulation of CDH1 expression. Also represses L1 retrotransposons in collaboration with MORC2 and, probably, SETDB1, the silencing is dependent of repressive epigenetic modifications, such as H3K9me3 mark. Silencing events often occur within introns of transcriptionally active genes, and lead to the down-regulation of host gene expression. The HUSH complex is also involved in the silencing of unintegrated retroviral DNA by being recruited by ZNF638: some part of the retroviral DNA formed immediately after infection remains unintegrated in the host genome and is transcriptionally repressed. This Homo sapiens (Human) protein is M-phase phosphoprotein 8.